The chain runs to 363 residues: GTP-binding protein 1 (363 aa).

In terms of domain architecture, OBG-type G spans 63-287 (ARVAFIGFPS…LKERIWEELN (225 aa)). Residues 69-76 (GFPSVGKS), 115-119 (DLPGI), and 246-249 (KIDA) contribute to the GTP site. Residues 287-362 (NLYRIYTKRK…EEGDVVTIVT (76 aa)) enclose the TGS domain.

Belongs to the TRAFAC class OBG-HflX-like GTPase superfamily. OBG GTPase family.

The chain is GTP-binding protein 1 (gtp1) from Schizosaccharomyces pombe (strain 972 / ATCC 24843) (Fission yeast).